Here is a 429-residue protein sequence, read N- to C-terminus: Endo-1,4-beta-xylanase 1 (429 aa).

Positions 1-19 (MQTKSILTAALLAAAPASA) are cleaved as a signal peptide. Residues 43–336 (NSDQQYNRIL…KPAWTSISSV (294 aa)) enclose the GH10 domain. The active-site Proton donor is the E150. The Nucleophile role is filled by E257. A disulfide bond links C286 and C292. Residues 364–395 (TTPPPISSPIVPSTTTTSAVPTTTVSPPEPEQ) form a disordered region. Positions 371-389 (SPIVPSTTTTSAVPTTTVS) are enriched in low complexity. The 37-residue stretch at 393–429 (PEQTRWGQCGGIGWNGPTKCQSPWTCTRLNDWYFQCL) folds into the CBM1 domain.

Belongs to the glycosyl hydrolase 10 (cellulase F) family.

It localises to the secreted. The catalysed reaction is Endohydrolysis of (1-&gt;4)-beta-D-xylosidic linkages in xylans.. It participates in glycan degradation; xylan degradation. Functionally, endo-1,4-beta-xylanase involved in the hydrolysis of xylan, a major structural heterogeneous polysaccharide found in plant biomass representing the second most abundant polysaccharide in the biosphere, after cellulose. In Humicola insolens (Soft-rot fungus), this protein is Endo-1,4-beta-xylanase 1.